The following is a 110-amino-acid chain: Large ribosomal subunit protein uL22 (110 aa).

The protein belongs to the universal ribosomal protein uL22 family. Part of the 50S ribosomal subunit.

Functionally, this protein binds specifically to 23S rRNA; its binding is stimulated by other ribosomal proteins, e.g. L4, L17, and L20. It is important during the early stages of 50S assembly. It makes multiple contacts with different domains of the 23S rRNA in the assembled 50S subunit and ribosome. In terms of biological role, the globular domain of the protein is located near the polypeptide exit tunnel on the outside of the subunit, while an extended beta-hairpin is found that lines the wall of the exit tunnel in the center of the 70S ribosome. This chain is Large ribosomal subunit protein uL22, found in Ruthia magnifica subsp. Calyptogena magnifica.